Here is a 306-residue protein sequence, read N- to C-terminus: Homeobox protein Hox-C13a (306 aa).

Residues 68–90 (SVYSDISSPDTGRQCPAPQTSSS) are disordered. The homeobox DNA-binding region spans 236-295 (GRKKRVPYTKLQLKELEKEYAASKFITKDKRRRISAATNLSERQVTIWFQNRRVKEKKFI).

It belongs to the Abd-B homeobox family.

It localises to the nucleus. Functionally, sequence-specific transcription factor which is part of a developmental regulatory system that provides cells with specific positional identities on the anterior-posterior axis. The sequence is that of Homeobox protein Hox-C13a (hoxc13a) from Takifugu rubripes (Japanese pufferfish).